Consider the following 170-residue polypeptide: Adenine phosphoribosyltransferase (170 aa).

This sequence belongs to the purine/pyrimidine phosphoribosyltransferase family. Homodimer.

The protein resides in the cytoplasm. The catalysed reaction is AMP + diphosphate = 5-phospho-alpha-D-ribose 1-diphosphate + adenine. Its pathway is purine metabolism; AMP biosynthesis via salvage pathway; AMP from adenine: step 1/1. In terms of biological role, catalyzes a salvage reaction resulting in the formation of AMP, that is energically less costly than de novo synthesis. This chain is Adenine phosphoribosyltransferase, found in Bacillus subtilis (strain 168).